The following is a 195-amino-acid chain: Interferon tau-8 (195 aa).

Positions 1-23 (MAFVLSLLMALVLVSYGPGGSLG) are cleaved as a signal peptide. 2 disulfides stabilise this stretch: C24/C122 and C52/C162.

This sequence belongs to the alpha/beta interferon family. IFN-alphaII subfamily. In terms of tissue distribution, constitutively and exclusively expressed in the mononuclear cells of the extraembryonic trophectoderm.

The protein localises to the secreted. Paracrine hormone primarily responsible for maternal recognition of pregnancy. Interacts with endometrial receptors, probably type I interferon receptors, and blocks estrogen receptor expression, preventing the estrogen-induced increase in oxytocin receptor expression in the endometrium. This results in the suppression of the pulsatile endometrial release of the luteolytic hormone prostaglandin F2-alpha, hindering the regression of the corpus luteum (luteolysis) and therefore a return to ovarian cyclicity. This, and a possible direct effect of IFN-tau on prostaglandin synthesis, leads in turn to continued ovarian progesterone secretion, which stimulates the secretion by the endometrium of the nutrients required for the growth of the conceptus. In summary, displays particularly high antiviral and antiproliferative potency concurrently with particular weak cytotoxicity, high antiluteolytic activity and immunomodulatory properties. In contrast with other IFNs, IFN-tau is not virally inducible. This Ovis aries (Sheep) protein is Interferon tau-8 (IFNT8).